Here is a 193-residue protein sequence, read N- to C-terminus: Peptidyl-tRNA hydrolase (193 aa).

Tyrosine 17 is a tRNA binding site. Histidine 22 (proton acceptor) is an active-site residue. TRNA-binding residues include phenylalanine 68, asparagine 70, and asparagine 116.

The protein belongs to the PTH family. Monomer.

The protein localises to the cytoplasm. The catalysed reaction is an N-acyl-L-alpha-aminoacyl-tRNA + H2O = an N-acyl-L-amino acid + a tRNA + H(+). Its function is as follows. Hydrolyzes ribosome-free peptidyl-tRNAs (with 1 or more amino acids incorporated), which drop off the ribosome during protein synthesis, or as a result of ribosome stalling. In terms of biological role, catalyzes the release of premature peptidyl moieties from peptidyl-tRNA molecules trapped in stalled 50S ribosomal subunits, and thus maintains levels of free tRNAs and 50S ribosomes. This is Peptidyl-tRNA hydrolase from Acinetobacter baylyi (strain ATCC 33305 / BD413 / ADP1).